Here is a 513-residue protein sequence, read N- to C-terminus: Aromatic amino acid aminotransferase 2 (513 aa).

Phosphoserine occurs at positions 90 and 92. Residues Tyr102, 143–144 (SN), Asn232, Tyr263, and 314–316 (TFS) contribute to the pyridoxal 5'-phosphate site. Asn232 provides a ligand contact to substrate. Position 317 is an N6-(pyridoxal phosphate)lysine (Lys317). Arg324 lines the pyridoxal 5'-phosphate pocket. Arg481 lines the substrate pocket.

This sequence belongs to the class-I pyridoxal-phosphate-dependent aminotransferase family. Pyridoxal 5'-phosphate is required as a cofactor.

Its subcellular location is the cytoplasm. The enzyme catalyses an aromatic L-alpha-amino acid + 2-oxoglutarate = an aromatic oxo-acid + L-glutamate. It carries out the reaction an aromatic L-alpha-amino acid + 4-methylsulfanyl-2-oxobutanoate = an aromatic oxo-acid + L-methionine. It catalyses the reaction L-kynurenine + 2-oxoglutarate = kynurenate + L-glutamate + H2O. The protein operates within amino-acid biosynthesis; L-methionine biosynthesis via salvage pathway; L-methionine from S-methyl-5-thio-alpha-D-ribose 1-phosphate: step 6/6. It functions in the pathway amino-acid degradation; L-kynurenine degradation; kynurenate from L-kynurenine: step 1/2. In terms of biological role, general aromatic amino acid transaminase involved in several otherwise unrelated metabolic pathways. Mainly involved in tryptophan degradation. Active with phenylalanine, tyrosine and tryptophan as amino donors and with phenylpyruvate, hydroxyphenylpyruvate and pyruvate as amino acceptors. Does not accept glutamate or 2-oxoglutarate as substrates. Also active with methionine, leucine, glutamine and kynurenine. Catalyzes the formation of methionine from 2-keto-4-methylthiobutyrate (KMTB) in the methionine salvage pathway primarily using aromatic amino acids (tyrosine, phenylalanine and tryptophan) as the amino donors. Catalyzes the irreversible transamination of the L-tryptophan metabolite L-kynurenine to form kynurenic acid (KA) with pyruvate as amino acceptor. The protein is Aromatic amino acid aminotransferase 2 of Saccharomyces cerevisiae (strain ATCC 204508 / S288c) (Baker's yeast).